The chain runs to 129 residues: uncharacterized protein (129 aa).

Residues F46–I66 form a helical membrane-spanning segment.

The protein resides in the membrane. This is an uncharacterized protein from Saccharomyces cerevisiae (strain ATCC 204508 / S288c) (Baker's yeast).